The sequence spans 156 residues: Transcription elongation factor GreA (156 aa).

Residues 44-67 (ENAEYEAAKEKQAMIEGRIQDLCQ) adopt a coiled-coil conformation.

It belongs to the GreA/GreB family.

Its function is as follows. Necessary for efficient RNA polymerase transcription elongation past template-encoded arresting sites. The arresting sites in DNA have the property of trapping a certain fraction of elongating RNA polymerases that pass through, resulting in locked ternary complexes. Cleavage of the nascent transcript by cleavage factors such as GreA or GreB allows the resumption of elongation from the new 3'terminus. GreA releases sequences of 2 to 3 nucleotides. In Syntrophobacter fumaroxidans (strain DSM 10017 / MPOB), this protein is Transcription elongation factor GreA.